The sequence spans 333 residues: Ketol-acid reductoisomerase (NADP(+)) (333 aa).

Positions Met-1–Thr-179 constitute a KARI N-terminal Rossmann domain. NADP(+) contacts are provided by residues Tyr-22–Gln-25, Lys-45, Ser-48, Ser-50, and Asp-80–Gln-83. Residue His-105 is part of the active site. NADP(+) is bound at residue Gly-131. Residues Thr-180–Val-325 form the KARI C-terminal knotted domain. Asp-188, Glu-192, Glu-224, and Glu-228 together coordinate Mg(2+). Ser-249 provides a ligand contact to substrate.

The protein belongs to the ketol-acid reductoisomerase family. It depends on Mg(2+) as a cofactor.

It catalyses the reaction (2R)-2,3-dihydroxy-3-methylbutanoate + NADP(+) = (2S)-2-acetolactate + NADPH + H(+). The catalysed reaction is (2R,3R)-2,3-dihydroxy-3-methylpentanoate + NADP(+) = (S)-2-ethyl-2-hydroxy-3-oxobutanoate + NADPH + H(+). It participates in amino-acid biosynthesis; L-isoleucine biosynthesis; L-isoleucine from 2-oxobutanoate: step 2/4. The protein operates within amino-acid biosynthesis; L-valine biosynthesis; L-valine from pyruvate: step 2/4. Involved in the biosynthesis of branched-chain amino acids (BCAA). Catalyzes an alkyl-migration followed by a ketol-acid reduction of (S)-2-acetolactate (S2AL) to yield (R)-2,3-dihydroxy-isovalerate. In the isomerase reaction, S2AL is rearranged via a Mg-dependent methyl migration to produce 3-hydroxy-3-methyl-2-ketobutyrate (HMKB). In the reductase reaction, this 2-ketoacid undergoes a metal-dependent reduction by NADPH to yield (R)-2,3-dihydroxy-isovalerate. This Mycobacterium avium (strain 104) protein is Ketol-acid reductoisomerase (NADP(+)).